Reading from the N-terminus, the 491-residue chain is UDP-N-acetylmuramate--L-alanine ligase (491 aa).

ATP is bound at residue 126–132 (GTHGKTT).

The protein belongs to the MurCDEF family.

The protein localises to the cytoplasm. The catalysed reaction is UDP-N-acetyl-alpha-D-muramate + L-alanine + ATP = UDP-N-acetyl-alpha-D-muramoyl-L-alanine + ADP + phosphate + H(+). Its pathway is cell wall biogenesis; peptidoglycan biosynthesis. Functionally, cell wall formation. This is UDP-N-acetylmuramate--L-alanine ligase from Salmonella gallinarum (strain 287/91 / NCTC 13346).